Here is a 386-residue protein sequence, read N- to C-terminus: 3-hydroxyisobutyryl-CoA hydrolase, mitochondrial (386 aa).

The transit peptide at 1-32 (MGLQGLCRLMSRFNSYKRTNIILQHLKMSNHT) directs the protein to the mitochondrion. N6-acetyllysine; alternate is present on lysine 92. Position 92 is an N6-succinyllysine; alternate (lysine 92). The substrate site is built by glutamate 121, glycine 146, glutamate 169, and aspartate 177. An N6-acetyllysine; alternate modification is found at lysine 221. At lysine 221 the chain carries N6-succinyllysine; alternate. Serine 234 carries the post-translational modification Phosphoserine. N6-succinyllysine occurs at positions 250 and 257. N6-acetyllysine; alternate is present on lysine 297. Position 297 is an N6-succinyllysine; alternate (lysine 297). Lysine 301 is subject to N6-succinyllysine. Position 353 is an N6-acetyllysine; alternate (lysine 353). Lysine 353 bears the N6-succinyllysine; alternate mark. Phosphoserine is present on serine 356. Residues lysine 360 and lysine 365 each carry the N6-acetyllysine modification. Lysine 377 bears the N6-succinyllysine mark.

The protein belongs to the enoyl-CoA hydratase/isomerase family.

Its subcellular location is the mitochondrion. The enzyme catalyses 3-hydroxy-2-methylpropanoyl-CoA + H2O = 3-hydroxy-2-methylpropanoate + CoA + H(+). Its pathway is amino-acid degradation; L-valine degradation. Its function is as follows. Hydrolyzes 3-hydroxyisobutyryl-CoA (HIBYL-CoA), a saline catabolite. Has high activity toward isobutyryl-CoA. Could be an isobutyryl-CoA dehydrogenase that functions in valine catabolism. Also hydrolyzes 3-hydroxypropanoyl-CoA. The polypeptide is 3-hydroxyisobutyryl-CoA hydrolase, mitochondrial (HIBCH) (Bos taurus (Bovine)).